The following is a 5142-amino-acid chain: Protein piccolo (5142 aa).

Residues 1 to 21 are compositionally biased toward low complexity; the sequence is MGNEASLEGEGLPEGLAAAAA. Disordered stretches follow at residues 1–154 and 177–583; these read MGNE…SMMP and DLIS…PSQG. Basic and acidic residues-rich tracts occupy residues 114-125, 136-150, and 188-202; these read RTTDTFRSEQKL, KESKSRTDLKEEHKS, and ETTKKQKVVQKEQGK. Residues 232–244 are compositionally biased toward polar residues; that stretch reads QDGTPKSISSQQP. 2 stretches are compositionally biased toward pro residues: residues 298 to 317 and 352 to 371; these read LPSPSKPPIQQPTPGKPPAQ and PVQPPGTTKPPAQPLGPAKP. Positions 376 to 385 are enriched in polar residues; it reads TGSEKPSSEQ. The tract at residues 397–555 is 10 X 10 AA tandem approximate repeats of P-A-K-P-Q-P-Q-Q-P-X; that stretch reads VGKTPAQQPG…PAKPSAQQST (159 aa). The span at 467–493 shows a compositional bias: pro residues; sequence TKPPSQLPGPAKPPPQQPGPAKPPPQQ. The span at 494–506 shows a compositional bias: low complexity; sequence PGSAKPPSQQPGS. Positions 507–522 are enriched in pro residues; the sequence is TKPPPQQPGPAKPSPQ. Residues 523-554 are compositionally biased toward low complexity; sequence QPGSTKPPSQQPGSAKPSAQQPSPAKPSAQQS. The C4-type zinc finger occupies 589–613; sequence CPLCNTTELLLHVPEKANFNTCTEC. 2 disordered regions span residues 650-929 and 945-1058; these read LAPV…TVTG and LIST…PEST. The segment covering 673–683 has biased composition (low complexity); that stretch reads SKSSPQPQQTS. Composition is skewed to basic and acidic residues over residues 684–702 and 743–755; these read PKKDAAPKQDLSKAPEPKK and EQDKAPVADDKPK. Residues 765 to 774 are compositionally biased toward polar residues; it reads DLVSSSSATT. The span at 841–857 shows a compositional bias: basic and acidic residues; the sequence is KGQKQVDPVQKKEEPKK. Residues 873-882 are compositionally biased toward pro residues; it reads KGSPTPPGPR. Positions 889-927 are enriched in polar residues; it reads VPTPQQSPKPQEQSRRFSLNLGSITDAPKSQPTTPQETV. Serine 906 and serine 918 each carry phosphoserine. Phosphothreonine is present on threonine 922. Residues 949-969 show a composition bias toward low complexity; it reads AGQPGPHSQSGPGAPMKQAPA. Basic and acidic residues-rich tracts occupy residues 996 to 1012 and 1019 to 1034; these read VKKETKAPAAEKLEPKA and KRTETEKKPPPIKDSK. The segment at 1059–1082 adopts a C4-type zinc-finger fold; that stretch reads CPLCKTELNIGSKDPPNFNTCTEC. 4 disordered regions span residues 1120–1163, 1183–1386, 1391–1410, and 1423–1868; these read GDIR…QEQE, EKIP…TDEK, GLKKDSFSQESSPSSPSDLA, and QAST…SDPE. Residues 1126–1139 are compositionally biased toward pro residues; the sequence is PPAPSGPKASPMPV. 3 stretches are compositionally biased toward basic and acidic residues: residues 1193 to 1265, 1307 to 1318, and 1330 to 1347; these read QKQE…HDLL, PKEDDKTTKTIK, and DQVEPGKEKTEKEDDKSD. The span at 1348–1358 shows a compositional bias: low complexity; the sequence is TSSSQQPKSPQ. Residues serine 1356, serine 1366, serine 1367, serine 1396, serine 1398, serine 1401, serine 1402, and serine 1405 each carry the phosphoserine modification. Polar residues predominate over residues 1359–1374; sequence GLSDTGYSSDGISSSL. Residues 1398–1407 show a composition bias toward low complexity; it reads SQESSPSSPS. Basic and acidic residues-rich tracts occupy residues 1428–1451 and 1469–1510; these read ADEKSEKKTQPHEVSPEQPKDQEK and KESQ…REPY. Residues serine 1516, serine 1517, serine 1519, serine 1522, serine 1546, serine 1549, serine 1570, and serine 1572 each carry the phosphoserine modification. Residues 1564-1576 are compositionally biased toward acidic residues; sequence SADEDASGSEDDE. A Phosphothreonine modification is found at threonine 1617. Phosphoserine occurs at positions 1618, 1628, and 1640. Residues 1631–1640 are compositionally biased toward acidic residues; it reads DEDDEAFDES. Over residues 1641-1652 the composition is skewed to basic and acidic residues; the sequence is PELKYRETKSQE. Positions 1671–1689 are enriched in polar residues; sequence ELNSTIADKYSAESSQKKT. Over residues 1693–1703 the composition is skewed to acidic residues; that stretch reads FDEEPELEMES. Serine 1703 bears the Phosphoserine mark. Threonine 1705 is subject to Phosphothreonine. Residues serine 1707 and serine 1712 each carry the phosphoserine modification. Residues 1715–1732 show a composition bias toward polar residues; that stretch reads EGSSSLHASSFTPGTSPT. A compositionally biased stretch (acidic residues) spans 1772 to 1785; sequence DSSEEEELREEEEL. A phosphoserine mark is found at serine 1773 and serine 1774. Positions 1786–1799 are enriched in basic and acidic residues; sequence LKEQEKQREIEQQQ. Threonine 1825 carries the phosphothreonine modification. Phosphoserine is present on serine 1831. The segment covering 1840–1855 has biased composition (basic and acidic residues); that stretch reads EELRQAAEMEELHRSS. A phosphoserine mark is found at serine 1860, serine 1865, serine 1873, and serine 1894. Disordered regions lie at residues 2169 to 2192, 2365 to 2438, and 2504 to 2536; these read PSESATSVPPSDTPSLTSSVSSVC, ETFG…PTIL, and EPSKPPIAPKPVIPQLPTTTQKPTDIHPKPTGL. Low complexity-rich tracts occupy residues 2174-2192 and 2374-2387; these read TSVPPSDTPSLTSSVSSVC and SQLPSGSPSVSSLP. Pro residues-rich tracts occupy residues 2404 to 2433 and 2506 to 2517; these read QPPPPPPPPPPPPPPPPPPPPPPLPPPTSP and SKPPIAPKPVIP. Serine 2562 is subject to Phosphoserine. At threonine 3069 the chain carries Phosphothreonine. Disordered stretches follow at residues 3407-3508 and 3558-3626; these read EKQP…DKTK and KTYK…LYSP. A compositionally biased stretch (basic and acidic residues) spans 3432–3441; the sequence is DDPRSFKKIV. Phosphoserine is present on serine 3443. Threonine 3447 and threonine 3474 each carry phosphothreonine. The segment covering 3474 to 3483 has biased composition (acidic residues); it reads TDDEDQDEWD. Positions 3574 to 3585 are enriched in polar residues; sequence DTQSPQYLSATS. 11 positions are modified to phosphoserine: serine 3577, serine 3585, serine 3615, serine 3619, serine 3625, serine 3628, serine 3631, serine 3652, serine 3678, serine 3680, and serine 3686. 2 disordered regions span residues 3652 to 3746 and 3833 to 3908; these read SPQK…MGTV and YMSD…QQSH. 2 stretches are compositionally biased toward polar residues: residues 3701 to 3716 and 3733 to 3745; these read EGYTTKGSQTMTSSGA and STGTQSTFSTMGT. Phosphoserine is present on serine 3835. The span at 3845–3857 shows a compositional bias: basic and acidic residues; the sequence is TRIESQHGIERPR. Residues 3859 to 3908 show a composition bias toward polar residues; the sequence is APQTEFSQFIPPQTQTESQLVPPTSPYTQYQYSSPALPTQAPTSYTQQSH. Phosphoserine is present on residues serine 4088 and serine 4204. The disordered stretch occupies residues 4278–4301; it reads EADKPYSSGSRSRPSSRPSSVYGL. Positions 4282-4301 are enriched in low complexity; sequence PYSSGSRSRPSSRPSSVYGL. Phosphoserine is present on residues serine 4358, serine 4362, serine 4365, serine 4394, and serine 4430. Positions 4389–4411 are disordered; sequence RDQFGSSHSLPEVQQHMREESRT. Residues 4496–4590 enclose the PDZ domain; the sequence is RIKITRDSKD…EAEICVRLDL (95 aa). Disordered stretches follow at residues 4597-4618 and 4645-4690; these read ENSQHLELHEPPKAVDKAKSPG and EKGS…TKVV. Basic and acidic residues predominate over residues 4598-4615; that stretch reads NSQHLELHEPPKAVDKAK. The segment covering 4652-4673 has biased composition (low complexity); the sequence is SGPTSAGSSSVPSPGQPGSPSV. Serine 4664 is modified (phosphoserine). The C2 1 domain occupies 4694-4823; the sequence is ITGEIQLQIN…SHLDNTPRWY (130 aa). 2 residues coordinate Ca(2+): aspartate 4723 and aspartate 4729. The residue at position 4778 (serine 4778) is a Phosphoserine. The Ca(2+) site is built by aspartate 4793, aspartate 4795, serine 4798, and aspartate 4801. 2 disordered regions span residues 4830–4907 and 4930–4986; these read ESID…VTQT and PTKP…QNGQ. 2 stretches are compositionally biased toward low complexity: residues 4838-4853 and 4877-4887; these read HSSQSSQQSPKPSVIK and SSPGSSKSSSE. Positions 4895–4907 are enriched in polar residues; that stretch reads PSRSQSKTSVTQT. Low complexity predominate over residues 4941–4965; it reads SSVSTGSSGSSFGSGYSVDSEGSSS. The region spanning 5007–5132 is the C2 2 domain; sequence VMGEIKIALK…DLRKRIVNWH (126 aa).

In terms of assembly, interacts with BSN, ERC2/CAST1, RIMS1 and UNC13A. Interacts (via C-terminus) with TRIO (via N-terminus). Interacts with CTBP1. Interacts with SIAH1; this interaction negatively regulates SIAH1 E3 ligase activity. Directly interacts with GIT1 and GIT2. The cofactor is Ca(2+). As to expression, moderately expressed in the developing cerebral cortex.

Its subcellular location is the presynaptic active zone. Its function is as follows. Scaffold protein of the presynaptic cytomatrix at the active zone (CAZ) which is the place in the synapse where neurotransmitter is released. After synthesis, participates in the formation of Golgi-derived membranous organelles termed Piccolo-Bassoon transport vesicles (PTVs) that are transported along axons to sites of nascent synaptic contacts. At the presynaptic active zone, regulates the spatial organization of synaptic vesicle cluster, the protein complexes that execute membrane fusion and compensatory endocytosis. Organizes as well the readily releasable pool of synaptic vesicles and safeguards a fraction of them to be not immediately available for action potential-induced release. Also functions in processes other than assembly such as the regulation of specific presynaptic protein ubiquitination by interacting with SIAH1 or the regulation of presynaptic autophagy. Also mediates synapse to nucleus communication leading to reconfiguration of gene expression by associating with the transcriptional corepressor CTBP1 and by subsequently reducing the size of its pool available for nuclear import. This chain is Protein piccolo, found in Homo sapiens (Human).